The chain runs to 50 residues: Photosystem II reaction center protein M (50 aa).

The chain crosses the membrane as a helical span at residues 6 to 26; it reads FGFVASLLFVGVPTIFLIGLF.

This sequence belongs to the PsbM family. As to quaternary structure, PSII is composed of 1 copy each of membrane proteins PsbA, PsbB, PsbC, PsbD, PsbE, PsbF, PsbH, PsbI, PsbJ, PsbK, PsbL, PsbM, PsbT, PsbX, PsbY, Psb30/Ycf12, peripheral proteins PsbO, CyanoQ (PsbQ), PsbU, PsbV and a large number of cofactors. It forms dimeric complexes.

The protein localises to the cellular thylakoid membrane. One of the components of the core complex of photosystem II (PSII). PSII is a light-driven water:plastoquinone oxidoreductase that uses light energy to abstract electrons from H(2)O, generating O(2) and a proton gradient subsequently used for ATP formation. It consists of a core antenna complex that captures photons, and an electron transfer chain that converts photonic excitation into a charge separation. This subunit is found at the monomer-monomer interface. The chain is Photosystem II reaction center protein M from Prochlorococcus marinus (strain MIT 9215).